Consider the following 955-residue polypeptide: Coiled-coil domain-containing protein 146 (955 aa).

Acidic residues predominate over residues 1 to 17 (MEDSSTDTEKEEEEEKD). Residues 1 to 22 (MEDSSTDTEKEEEEEKDEKDQE) are disordered. 5 coiled-coil regions span residues 114–141 (EAFS…KERE), 169–321 (GEME…AREN), 400–461 (STLS…LLRM), 534–640 (KAHQ…RNES), and 667–832 (NGEI…MKQA).

Interacts with CCDC38 and CCDC42. Interacts with intraflagellar transport proteins IFT20 and IFT88. As to quaternary structure, (Microbial infection) Interacts with Chlamydia trachomatis incM/YT288. In host cells infected with C.trachomatis incM, CCDC146 is recruited to the periphery of the pathogen-containing vacuole but recruitment is not dependent on incM. In terms of tissue distribution, widely expressed.

The protein resides in the cytoplasm. It is found in the cytoskeleton. The protein localises to the microtubule organizing center. It localises to the centrosome. Its subcellular location is the centriole. The protein resides in the flagellum axoneme. It is found in the cilium basal body. The protein localises to the midbody. Essential for sperm flagellum biogenesis and male fertility. This chain is Coiled-coil domain-containing protein 146 (CCDC146), found in Homo sapiens (Human).